Consider the following 463-residue polypeptide: Glucagon-like peptide 1 receptor (463 aa).

An N-terminal signal peptide occupies residues 1–21; the sequence is MASTPSLLRLALLLLGAVGRA. Residues 22–139 lie on the Extracellular side of the membrane; it reads GPRPQGTTVS…KRGERNFPEE (118 aa). Disulfide bonds link cysteine 46/cysteine 71, cysteine 62/cysteine 104, and cysteine 85/cysteine 126. Asparagine 63, asparagine 82, and asparagine 115 each carry an N-linked (GlcNAc...) asparagine glycan. The chain crosses the membrane as a helical span at residues 140 to 164; it reads QLLSLYIIYTVGYALSFSALVIASA. Residues 165–175 are Cytoplasmic-facing; sequence ILVGFRHLHCT. A helical membrane pass occupies residues 176–201; sequence RNYIHLNLFASFILRALSVFIKDAAL. Residues 202–227 lie on the Extracellular side of the membrane; the sequence is KWMYSTAAQQHQWDGLLSYQDSLGCR. An intrachain disulfide couples cysteine 226 to cysteine 296. A helical transmembrane segment spans residues 228–251; the sequence is LVFLLMQYCVAANYYWLLVEGVYL. The Cytoplasmic portion of the chain corresponds to 252–265; that stretch reads YTLLAFSVFSEQRI. Residues 266-290 traverse the membrane as a helical segment; sequence FKLYLSIGWGVPLLFVIPWGIVKYL. The Extracellular portion of the chain corresponds to 291–305; sequence YEDEGCWTRNSNMNY. A helical transmembrane segment spans residues 306 to 328; it reads WLIIRLPILFAIGVNFLIFIRVI. Residues 329-348 lie on the Cytoplasmic side of the membrane; the sequence is CIVVSKLKANLMCKTDIKCR. An ADP-ribosylcysteine modification is found at cysteine 341. An ADP-ribosylarginine modification is found at arginine 348. The helical transmembrane segment at 349 to 370 threads the bilayer; the sequence is LAKSTLTLIPLLGTHEVIFAFV. The interval 352–355 is important for allosteric inhibitor binding; that stretch reads STLT. Topologically, residues 371–383 are extracellular; it reads MDEHARGTLRFIK. A helical transmembrane segment spans residues 384 to 404; that stretch reads LFTELSFTSFQGLMVAILYCF. Over 405–463 the chain is Cytoplasmic; the sequence is VNNEVQMEFRKCWERWRLEHLNIQRDCSMKPLKCPTSSVSSGATVGSSVYAATCQSSYS.

Belongs to the G-protein coupled receptor 2 family. As to quaternary structure, may form homodimers and heterodimers with GIPR. N-glycosylation enhances cell surface expression and lengthens receptor half-life by preventing degradation in the ER. In terms of tissue distribution, detected in pancreatic islets (at protein level). Detected in pancreatic islets and lungs.

It localises to the cell membrane. Its function is as follows. G-protein coupled receptor for glucagon-like peptide 1 (GLP-1). Ligand binding triggers activation of a signaling cascade that leads to the activation of adenylyl cyclase and increased intracellular cAMP levels. Plays a role in regulating insulin secretion in response to GLP-1. The polypeptide is Glucagon-like peptide 1 receptor (Glp1r) (Mus musculus (Mouse)).